The sequence spans 218 residues: Adenylate kinase (218 aa).

Residue 11 to 16 coordinates ATP; sequence GAGKGT. Positions 31–60 are NMP; that stretch reads STGDMFREAMANKTKVGLEAKSYIDKGNLV. AMP-binding positions include T32, R37, 58–60, 86–89, and Q93; these read NLV and GFPR. Positions 127–165 are LID; sequence ARYMCKNCGATYNKLSKQPKVEGTCDRCGSHEFYQREDD. Residue R128 participates in ATP binding. C131 and C134 together coordinate Zn(2+). 137-138 is a binding site for ATP; it reads TY. Residues C151 and C154 each contribute to the Zn(2+) site. Positions 162 and 173 each coordinate AMP. An ATP-binding site is contributed by Q201.

The protein belongs to the adenylate kinase family. As to quaternary structure, monomer.

Its subcellular location is the cytoplasm. It carries out the reaction AMP + ATP = 2 ADP. Its pathway is purine metabolism; AMP biosynthesis via salvage pathway; AMP from ADP: step 1/1. In terms of biological role, catalyzes the reversible transfer of the terminal phosphate group between ATP and AMP. Plays an important role in cellular energy homeostasis and in adenine nucleotide metabolism. The protein is Adenylate kinase of Lactobacillus helveticus (strain DPC 4571).